The sequence spans 312 residues: Olfactory receptor 52A1 (312 aa).

At 1–27 (MSISNITVYMPSVLTLVGIPGLESVQC) the chain is on the extracellular side. Asparagine 5 carries N-linked (GlcNAc...) asparagine glycosylation. The helical transmembrane segment at 28 to 48 (WIGIPFCAIYLIAMIGNSLLL) threads the bilayer. Residues 49-56 (SIIKSERS) are Cytoplasmic-facing. Residues 57-77 (LHEPLYIFLGMLGATDIALAS) form a helical membrane-spanning segment. Topologically, residues 78–101 (SIMPKMLGIFWFNVPEIYFDSCLL) are extracellular. A disulfide bond links cysteine 99 and cysteine 182. The helical transmembrane segment at 102 to 122 (QMWFIHTLQGIESGILVAMAL) threads the bilayer. At 123 to 141 (DRYVAICYPLRHANIFTHQ) the chain is on the cytoplasmic side. The chain crosses the membrane as a helical span at residues 142–162 (LVIQIGTMVVLRAAILVAPCL). The Extracellular portion of the chain corresponds to 163–199 (VLIKCRFQFYHTTVISHSYCEHMAIVKLAAANVQVNK). The helical transmembrane segment at 200–220 (IYGLFVAFTVAGFDLTFITLS) threads the bilayer. The Cytoplasmic segment spans residues 221-240 (YIQIFITVFRLPQKEARFKA). The chain crosses the membrane as a helical span at residues 241 to 261 (FNTCIAHICVFLQFYLLAFFS). Residues 262–276 (FFTHRFGSHISPYIH) are Extracellular-facing. Residues 277–297 (ILFSSIYLLVPPFLNPLVYGA) form a helical membrane-spanning segment. Topologically, residues 298–312 (KTTQIRIHVVKMFCS) are cytoplasmic.

Belongs to the G-protein coupled receptor 1 family.

It localises to the cell membrane. Functionally, odorant receptor. The sequence is that of Olfactory receptor 52A1 (OR52A1) from Homo sapiens (Human).